The primary structure comprises 585 residues: Involucrin (585 aa).

Residues 1–15 show a composition bias toward polar residues; sequence MSQQHTLPVTLSPAL. The segment at 1–132 is disordered; the sequence is MSQQHTLPVT…LEEEKKLLDQ (132 aa). A lipid anchor (Omega-hydroxyceramide glutamate ester) is attached at Q79. Residues 92–115 show a composition bias toward basic and acidic residues; sequence WEQHEEYQKAENPEQQLKQEKTQR. 2 omega-hydroxyceramide glutamate ester lipidation sites follow: Q118 and Q133. Residues 149–540 form a disordered region; the sequence is KEQLLELPEQ…KDLEQQKGQL (392 aa). A run of 23 repeats spans residues 153–162, 163–172, 173–182, 183–192, 193–202, 203–212, 213–222, 223–232, 233–242, 243–252, 253–262, 263–272, 273–282, 283–292, 293–302, 303–312, 313–322, 323–332, 333–342, 343–352, 353–362, 363–372, and 373–382. The tract at residues 153–542 is 39 X 10 AA approximate tandem repeats of [LP]-[EKG]-[LHVYQEK]-[PLSQE]-[EQDV]-[QHEKRGA]-Q-[EMVQLP]-[GKLE]-[QHVNLD]; sequence LELPEQQEGH…LEQQKGQLEQ (390 aa). Over residues 159–178 the composition is skewed to basic and acidic residues; it reads QEGHLKHLEQQEGQLKHPEQ. Positions 179–261 are enriched in low complexity; it reads QEGQLELPEQ…QLELSEQQEG (83 aa). Residues 262–271 are compositionally biased toward basic and acidic residues; sequence QLKHLEHQEG. 3 stretches are compositionally biased toward basic and acidic residues: residues 292–304, 314–328, and 341–360; these read QLKH…KQPE, KHLE…HLEQ, and GQLK…EHQE. The segment covering 361 to 383 has biased composition (low complexity); it reads GQLGLPEQQVLQLKQLEKQQGQP. The 24; approximate repeat unit spans residues 383 to 392; it reads PKHLEEEEGQ. Basic and acidic residues predominate over residues 384–393; that stretch reads KHLEEEEGQL. Tandem repeats lie at residues 393–402, 403–412, 413–422, 423–432, 433–442, 443–452, 453–462, 463–472, 473–482, 483–492, and 493–502. Basic and acidic residues-rich tracts occupy residues 415-424 and 431-444; these read QQERQVEHLE and KHLE…KHLE. Over residues 445 to 462 the composition is skewed to low complexity; that stretch reads QQQGQLEVPEQQVGQPKN. Positions 479–488 are enriched in basic and acidic residues; that stretch reads QVKHLEKQEA. Q496 participates in a covalent cross-link: Isoglutamyl lysine isopeptide (Gln-Lys) (interchain with K-? in other proteins). Residues 501-535 are compositionally biased toward basic and acidic residues; it reads KHLEQQEKHLEHPEQQDGQLKHLEQQEGQLKDLEQ. Residues 503-512 form a 36; approximate repeat; the sequence is LEQQEKHLEH. Tandem repeats lie at residues 513–522 and 523–532. A 39; approximate repeat occupies 533-542; that stretch reads LEQQKGQLEQ.

The protein belongs to the involucrin family. Directly or indirectly cross-linked to cornifelin (CNFN). Substrate of transglutaminase. Some glutamines and lysines are cross-linked to other involucrin molecules, to other proteins such as keratin, desmoplakin, periplakin and envoplakin, and to lipids like omega-hydroxyceramide. As to expression, keratinocytes of epidermis and other stratified squamous epithelia.

Its subcellular location is the cytoplasm. Its function is as follows. Part of the insoluble cornified cell envelope (CE) of stratified squamous epithelia. The polypeptide is Involucrin (IVL) (Homo sapiens (Human)).